Here is a 229-residue protein sequence, read N- to C-terminus: MANELTWHDVLAEEKQQPYFLNTLQTVASERQSGVTIYPPQKDVFNAFRFTALGDVKVVILGQDPYHGPGQAHGLAFSVRPGIATPPSLLNMYKELENTIPGFTRPNHGYLESWARQGVLLLNTVLTVRAGQAHSHASLGWETFTDKVISLINQHREGVVFLLWGSHAQKKGAIIDKQRHHILKAPHPSPLSAHRGFFGCNHFVLANQWLEQRGEKPIDWMPVLPAESE.

Asp-64 (proton acceptor) is an active-site residue.

Belongs to the uracil-DNA glycosylase (UDG) superfamily. UNG family.

The protein localises to the cytoplasm. It catalyses the reaction Hydrolyzes single-stranded DNA or mismatched double-stranded DNA and polynucleotides, releasing free uracil.. Excises uracil residues from the DNA which can arise as a result of misincorporation of dUMP residues by DNA polymerase or due to deamination of cytosine. The polypeptide is Uracil-DNA glycosylase (Escherichia coli O81 (strain ED1a)).